The primary structure comprises 334 residues: Flavonol synthase/flavanone 3-hydroxylase (334 aa).

Residues 196 to 295 (DLVYLMKINY…RMSWPVFLEP (100 aa)) enclose the Fe2OG dioxygenase domain. Fe cation contacts are provided by His-220, Asp-222, and His-276.

The protein belongs to the iron/ascorbate-dependent oxidoreductase family. It depends on Fe cation as a cofactor. Requires L-ascorbate as cofactor.

It is found in the cytoplasm. It catalyses the reaction a (2R,3R)-dihydroflavonol + 2-oxoglutarate + O2 = a flavonol + succinate + CO2 + H2O. It carries out the reaction a (2S)-flavan-4-one + 2-oxoglutarate + O2 = a (2R,3R)-dihydroflavonol + succinate + CO2. It functions in the pathway secondary metabolite biosynthesis; flavonoid biosynthesis. In terms of biological role, catalyzes the formation of flavonols from dihydroflavonols. It can act on dihydrokaempferol to produce kaempferol, on dihydroquercetin to produce quercitin and on dihydromyricetin to produce myricetin. This chain is Flavonol synthase/flavanone 3-hydroxylase (FLS), found in Eustoma exaltatum subsp. russellianum (Bluebells).